Consider the following 330-residue polypeptide: Protein ANTHESIS POMOTING FACTOR 1 (330 aa).

6 WD repeats span residues 22–61 (DFGG…QLKI), 112–151 (GHKD…CQGI), 153–191 (HLRG…KGPF), 198–237 (GDTA…KKCG), 242–281 (PSQG…EVAR), and 284–323 (NNIG…APAD).

The protein belongs to the WD repeat SWD2 family. In terms of tissue distribution, expressed in the shoot apical meristem (SAM), embryos, seedlings, cotyledons, leaves primordia, young leaves and roots.

Its subcellular location is the nucleus. Functionally, component of a chromatin regulatory complex involved in regulating chromatin structure in the nucleus. Promotes flowering under long days (LD) via the regulation of bolting. This chain is Protein ANTHESIS POMOTING FACTOR 1, found in Arabidopsis thaliana (Mouse-ear cress).